The primary structure comprises 90 residues: LYR motif-containing protein 2 (90 aa).

Residues 1 to 19 (MASSRLPASALTLKQFIQR) constitute a mitochondrion transit peptide.

It belongs to the complex I LYR family.

It localises to the mitochondrion. Functionally, involved in efficient integration of the N-module into mitochondrial respiratory chain complex I. This is LYR motif-containing protein 2 (lyrm2) from Salmo salar (Atlantic salmon).